The following is a 324-amino-acid chain: Protein ChrB (324 aa).

Together with ChrA1, this protein reduces chromate accumulation and is essential for chromate resistance, possibly as a regulatory protein. This Cupriavidus metallidurans (strain ATCC 43123 / DSM 2839 / NBRC 102507 / CH34) (Ralstonia metallidurans) protein is Protein ChrB.